Consider the following 464-residue polypeptide: Argininosuccinate lyase (464 aa).

This sequence belongs to the lyase 1 family. Argininosuccinate lyase subfamily.

The protein resides in the cytoplasm. It carries out the reaction 2-(N(omega)-L-arginino)succinate = fumarate + L-arginine. It functions in the pathway amino-acid biosynthesis; L-arginine biosynthesis; L-arginine from L-ornithine and carbamoyl phosphate: step 3/3. The chain is Argininosuccinate lyase from Koribacter versatilis (strain Ellin345).